The chain runs to 294 residues: 4-hydroxy-tetrahydrodipicolinate synthase (294 aa).

T44 contributes to the pyruvate binding site. Y132 (proton donor/acceptor) is an active-site residue. K160 serves as the catalytic Schiff-base intermediate with substrate. V202 serves as a coordination point for pyruvate.

Belongs to the DapA family. As to quaternary structure, homotetramer; dimer of dimers.

It is found in the cytoplasm. The catalysed reaction is L-aspartate 4-semialdehyde + pyruvate = (2S,4S)-4-hydroxy-2,3,4,5-tetrahydrodipicolinate + H2O + H(+). The protein operates within amino-acid biosynthesis; L-lysine biosynthesis via DAP pathway; (S)-tetrahydrodipicolinate from L-aspartate: step 3/4. Catalyzes the condensation of (S)-aspartate-beta-semialdehyde [(S)-ASA] and pyruvate to 4-hydroxy-tetrahydrodipicolinate (HTPA). The polypeptide is 4-hydroxy-tetrahydrodipicolinate synthase (Leptospira borgpetersenii serovar Hardjo-bovis (strain JB197)).